The following is a 250-amino-acid chain: Envelope glycoprotein L (250 aa).

Residues 1 to 18 (MELLLFVMSLILLTFSKA) form the signal peptide. The gL betaherpesvirus-type domain maps to 31-239 (KLDDCIAAVI…ETYNSKLPFR (209 aa)). Cysteines 136 and 141 form a disulfide.

This sequence belongs to the herpesviridae glycoprotein L (gL) family. Betaherpesvirinae gL subfamily. Interacts with glycoprotein H (gH); this interaction is necessary for the correct processing and cell surface expression of gH. Part of a gH-gL-gO complex.

It localises to the virion membrane. It is found in the host cell membrane. The protein localises to the host Golgi apparatus. The protein resides in the host trans-Golgi network. The heterodimer glycoprotein H-glycoprotein L is required for the fusion of viral and plasma membranes leading to virus entry into the host cell. Acts as a functional inhibitor of gH and maintains gH in an inhibited form. Upon binding to host integrins, gL dissociates from gH leading to activation of the viral fusion glycoproteins gB and gH. The protein is Envelope glycoprotein L of Human herpesvirus 6A (strain Uganda-1102) (HHV-6 variant A).